The primary structure comprises 247 residues: 2,3-bisphosphoglycerate-dependent phosphoglycerate mutase (247 aa).

Substrate-binding positions include R8–N15, T21–G22, R60, E87–Y90, K98, R114–R115, and G183–N184. H9 serves as the catalytic Tele-phosphohistidine intermediate. E87 (proton donor/acceptor) is an active-site residue.

The protein belongs to the phosphoglycerate mutase family. BPG-dependent PGAM subfamily. As to quaternary structure, homodimer.

It carries out the reaction (2R)-2-phosphoglycerate = (2R)-3-phosphoglycerate. Its pathway is carbohydrate degradation; glycolysis; pyruvate from D-glyceraldehyde 3-phosphate: step 3/5. Catalyzes the interconversion of 2-phosphoglycerate and 3-phosphoglycerate. The chain is 2,3-bisphosphoglycerate-dependent phosphoglycerate mutase from Leptothrix cholodnii (strain ATCC 51168 / LMG 8142 / SP-6) (Leptothrix discophora (strain SP-6)).